The chain runs to 307 residues: Haloalkane dehalogenase (307 aa).

The AB hydrolase-1 domain occupies 34–158 (PVLFLHGNPT…FQAFRTADVG (125 aa)). Asp-106 (nucleophile) is an active-site residue. The Proton donor role is filled by Glu-130. The active-site Proton acceptor is the His-272.

This sequence belongs to the haloalkane dehalogenase family. Type 2 subfamily. As to quaternary structure, monomer.

The catalysed reaction is 1-haloalkane + H2O = a halide anion + a primary alcohol + H(+). It participates in xenobiotic degradation; 1,2-dibromoethane degradation. Its function is as follows. Catalyzes hydrolytic cleavage of carbon-halogen bonds in halogenated aliphatic compounds, leading to the formation of the corresponding primary alcohols, halide ions and protons. Has a broad substrate specificity, which includes mono- and di-chlorinated and brominated alkanes. The highest activity was found with 1,2-dibromoethane, whereas low activity was measured with the analog 1,2-dichloroethane. This chain is Haloalkane dehalogenase (dhaAF), found in Mycobacterium sp. (strain GP1).